The sequence spans 464 residues: MATGNVGKLVQIIGAVVDIRFSSEEIPALLSAITIQGPDGLVTVEVAQHIGDDTARCVAMRSTDGLVRGMEAIDTGAPITVPVGRETLGRIFNVLGEVVDEGKPVEAKMHLPIHREAPSFEEQEAATEIFETGIKVVDLIAPYARGGKVGLFGGAGVGKTVLIMELINNIAKEHGGLSVFAGVGERTREGNDLYHEMIESGVIDKTSLVYGQMNEPPGARMRVGLTGLTMAEYFRDQEGQDVLLFIDNIFRFTQAGSEVSALLGRMPSAVGYQPTLATEMGALQERITSTKKGSITSVQAVYVPADDLTDPAPATTFAHLDATTVLSRQISELGIYPAVDPLDSNSRILDPATVGQEHYEVARGVQEVLQRYKELQDIIAILGMDELSDEDKLTVARARRVQRFLSQPFFVAEQFTGMAGKYVPLKETIRGFKEILDGKHDDLPESAFLFVGSIDEAVEKANKG.

Residue 153–160 coordinates ATP; sequence GGAGVGKT.

This sequence belongs to the ATPase alpha/beta chains family. In terms of assembly, F-type ATPases have 2 components, CF(1) - the catalytic core - and CF(0) - the membrane proton channel. CF(1) has five subunits: alpha(3), beta(3), gamma(1), delta(1), epsilon(1). CF(0) has three main subunits: a(1), b(2) and c(9-12). The alpha and beta chains form an alternating ring which encloses part of the gamma chain. CF(1) is attached to CF(0) by a central stalk formed by the gamma and epsilon chains, while a peripheral stalk is formed by the delta and b chains.

It is found in the cell membrane. The enzyme catalyses ATP + H2O + 4 H(+)(in) = ADP + phosphate + 5 H(+)(out). In terms of biological role, produces ATP from ADP in the presence of a proton gradient across the membrane. The catalytic sites are hosted primarily by the beta subunits. This Alkaliphilus metalliredigens (strain QYMF) protein is ATP synthase subunit beta.